Consider the following 706-residue polypeptide: Choline transporter-like protein 2 (706 aa).

Over 1-33 (MGKDSQNYYGKHGTPQKYDPTFKGPIYNRGCTD) the chain is Cytoplasmic. At T14 the chain carries Phosphothreonine. Residues 34 to 54 (VICCVLLFLAIVGYVAVGIIA) form a helical membrane-spanning segment. Residues 55–232 (WTHGDPRKVI…QIFEDYTVSW (178 aa)) lie on the Extracellular side of the membrane. N187 and N200 each carry an N-linked (GlcNAc...) asparagine glycan. A helical transmembrane segment spans residues 233-253 (YWIIIGLVIAMVLSLLFIVLL). Residues 254 to 256 (RFL) are Cytoplasmic-facing. The helical transmembrane segment at 257–277 (AGIMVWVMIVMVILVLGYGIF) threads the bilayer. At 278–315 (HCYMEYSRLRGEAGSDVSLVDLGFQTDLRVYLHLRQTW) the chain is on the extracellular side. Residues 316–336 (MAFMIILSILEVVIILLLIFL) traverse the membrane as a helical segment. At 337–364 (RKRILIAIALIKEASRAVGHVMCSLLYP) the chain is on the cytoplasmic side. Residues 365-385 (LVTFFLLCLCIAYWASTSVFL) form a helical membrane-spanning segment. The Extracellular segment spans residues 386 to 454 (STSNTAVYKV…LQIFNAFMFF (69 aa)). Residue N417 is glycosylated (N-linked (GlcNAc...) asparagine). A helical membrane pass occupies residues 455–477 (WLANFVLALGQVTLAGAFASYYW). Residues 478 to 504 (AMRKPDDMPAFPLFSAFGRALRYHTGS) lie on the Cytoplasmic side of the membrane. Residues 505-525 (LAFGSLILAIVQIIRVMLEYL) form a helical membrane-spanning segment. Topologically, residues 526 to 563 (DQRLKAAQNKFAKFLMVCLKCCFWCLEKFIKFLNRNAY) are extracellular. Residues 564-584 (IMIAIYGTNFCTSARNAFFLL) form a helical membrane-spanning segment. Over 585 to 599 (MRNIIRVAVLDKVTD) the chain is Cytoplasmic. Residues 600-620 (FLFLLGKLLIVGSVGILAFFF) form a helical membrane-spanning segment. Residues 621 to 638 (FTHRIRIVQDTAPPLNYY) lie on the Extracellular side of the membrane. Residues 639–659 (WVPILTVIIGSYLIAHGFFSV) traverse the membrane as a helical segment. Topologically, residues 660-706 (YGMCVDTLFLCFLEDLERNDGSAERPYFMSSTLKKLLNKTNKKVAES) are cytoplasmic.

This sequence belongs to the CTL (choline transporter-like) family. In terms of assembly, interacts with COCH. Post-translationally, glycosylated, glycosylation differs from tissue to tissue. The molecular mass of the mature glycosylated protein is highest in kidney, followed by lung, colon and spleen, then brain and tongue. Expressed at high levels in lung, colon, inner ear and spleen (at protein level). Progressively lower levels in brain, tongue, liver and kidney (at protein level). In the kidney, prominent expression in glomeruli in the lining of Bowman's capsule and on the mesangial cells adjacent to the vessels within the glomerulus (at protein level). Strongly expressed on the membranes of splenocytes and in lung parenchyme (at protein level). In terms of tissue distribution, expressed at higher levels than isoform 2 in colon, heart, kidney, lung, cochlea, tongue and muscle, as well as in the inner ear. As to expression, predominantly expressed in brain, liver and spleen.

It localises to the cell membrane. The protein resides in the mitochondrion outer membrane. The enzyme catalyses choline(out) + n H(+)(in) = choline(in) + n H(+)(out). The catalysed reaction is ethanolamine(out) + n H(+)(in) = ethanolamine(in) + n H(+)(out). In terms of biological role, choline/H+ antiporter, mainly in mitochodria. Also acts as a low-affinity ethanolamine/H+ antiporter, regulating the supply of extracellular ethanolamine (Etn) for the CDP-Etn pathway, redistribute intracellular Etn and balance the CDP-Cho and CDP-Etn arms of the Kennedy pathway. In Mus musculus (Mouse), this protein is Choline transporter-like protein 2 (Slc44a2).